The chain runs to 298 residues: MACIENVLGGHAPSPLVVSVDKNGNQELHHDMPLQCLSSKPEDDAEPWGQPQVPLRPSVNVLTDLDSKQLEWPSERTGSCIPLHSLRAHRHPYGPPPAVAEESLATAEVNSSDALAGWRQEGQDAINVSWEVSGGPPALIVGGTKVNNGGTERGSNNARLHVALPQGKGFFPPRGPQVRGPSHIPTLRSGIVMEVPPGNTRIACRGKLAHVSFPLRGPCHPMHNWPRPIPLSSSTPGLPSCSTVHCFIPPRPPIFNPFLTMPLPFAPPPIFGPPLPSYFAHFHSGGMPAPASPNREHS.

A disordered region spans residues 36–56; that stretch reads CLSSKPEDDAEPWGQPQVPLR.

This Homo sapiens (Human) protein is Proline-rich protein 32 (PRR32).